The sequence spans 556 residues: Formate--tetrahydrofolate ligase (556 aa).

65–72 (TPAGEGKT) is a binding site for ATP.

This sequence belongs to the formate--tetrahydrofolate ligase family.

The enzyme catalyses (6S)-5,6,7,8-tetrahydrofolate + formate + ATP = (6R)-10-formyltetrahydrofolate + ADP + phosphate. Its pathway is one-carbon metabolism; tetrahydrofolate interconversion. The chain is Formate--tetrahydrofolate ligase from Peptoclostridium acidaminophilum (Eubacterium acidaminophilum).